A 143-amino-acid chain; its full sequence is Actin-depolymerizing factor (143 aa).

The ADF-H domain occupies 11–143 (GMGVADHSKN…DLEVLRERAH (133 aa)).

The protein belongs to the actin-binding proteins ADF family.

Actin-depolymerizing protein. Severs actin filaments (F-actin) and binds to actin monomers. This chain is Actin-depolymerizing factor, found in Vitis vinifera (Grape).